A 304-amino-acid chain; its full sequence is Acetyl-coenzyme A carboxylase carboxyl transferase subunit beta (304 aa).

The CoA carboxyltransferase N-terminal domain maps to 23-292; that stretch reads VWTKCDSCGQ…PNPDAPREGV (270 aa). The Zn(2+) site is built by Cys-27, Cys-30, Cys-46, and Cys-49. The C4-type zinc finger occupies 27–49; it reads CDSCGQVLYRAELERNLEVCPKC. Residues 284–304 form a disordered region; it reads NPDAPREGVVVPPAPGQESEA.

Belongs to the AccD/PCCB family. In terms of assembly, acetyl-CoA carboxylase is a heterohexamer composed of biotin carboxyl carrier protein (AccB), biotin carboxylase (AccC) and two subunits each of ACCase subunit alpha (AccA) and ACCase subunit beta (AccD). Zn(2+) is required as a cofactor.

It localises to the cytoplasm. The enzyme catalyses N(6)-carboxybiotinyl-L-lysyl-[protein] + acetyl-CoA = N(6)-biotinyl-L-lysyl-[protein] + malonyl-CoA. Its pathway is lipid metabolism; malonyl-CoA biosynthesis; malonyl-CoA from acetyl-CoA: step 1/1. In terms of biological role, component of the acetyl coenzyme A carboxylase (ACC) complex. Biotin carboxylase (BC) catalyzes the carboxylation of biotin on its carrier protein (BCCP) and then the CO(2) group is transferred by the transcarboxylase to acetyl-CoA to form malonyl-CoA. The polypeptide is Acetyl-coenzyme A carboxylase carboxyl transferase subunit beta (Salmonella arizonae (strain ATCC BAA-731 / CDC346-86 / RSK2980)).